Here is a 94-residue protein sequence, read N- to C-terminus: Large ribosomal subunit protein bL27 (94 aa).

A propeptide spanning residues 1–9 (MLELNLQLF) is cleaved from the precursor. Residues 12–33 (KKGGGSTSNGRDSQAKRLGAKA) are disordered.

Belongs to the bacterial ribosomal protein bL27 family. The N-terminus is cleaved by ribosomal processing cysteine protease Prp.

The chain is Large ribosomal subunit protein bL27 from Lactococcus lactis subsp. lactis (strain IL1403) (Streptococcus lactis).